The sequence spans 496 residues: 2,3-bisphosphoglycerate-independent phosphoglycerate mutase (496 aa).

The Mn(2+) site is built by Asp12 and Ser62. Residue Ser62 is the Phosphoserine intermediate of the active site. Substrate is bound by residues His121, 150–151 (RD), Arg181, Arg187, 252–255 (RNDR), and Lys317. Asp384, His388, Asp425, His426, and His444 together coordinate Mn(2+).

This sequence belongs to the BPG-independent phosphoglycerate mutase family. As to quaternary structure, monomer. The cofactor is Mn(2+).

The enzyme catalyses (2R)-2-phosphoglycerate = (2R)-3-phosphoglycerate. It participates in carbohydrate degradation; glycolysis; pyruvate from D-glyceraldehyde 3-phosphate: step 3/5. Its function is as follows. Catalyzes the interconversion of 2-phosphoglycerate and 3-phosphoglycerate. The polypeptide is 2,3-bisphosphoglycerate-independent phosphoglycerate mutase (Anaplasma phagocytophilum (strain HZ)).